The primary structure comprises 270 residues: Glutamate racemase (270 aa).

Residues 14–15 (DS) and 46–47 (YG) each bind substrate. Cys77 (proton donor/acceptor) is an active-site residue. Residue 78 to 79 (NT) coordinates substrate. Catalysis depends on Cys189, which acts as the Proton donor/acceptor. 190–191 (TH) is a substrate binding site.

It belongs to the aspartate/glutamate racemases family.

The catalysed reaction is L-glutamate = D-glutamate. The protein operates within cell wall biogenesis; peptidoglycan biosynthesis. Provides the (R)-glutamate required for cell wall biosynthesis. The sequence is that of Glutamate racemase from Neisseria meningitidis serogroup A / serotype 4A (strain DSM 15465 / Z2491).